The primary structure comprises 510 residues: Amidophosphoribosyltransferase (510 aa).

Cys2 (nucleophile) is an active-site residue. Positions 2-239 (CGILGIALAD…PGEAVIIPKD (238 aa)) constitute a Glutamine amidotransferase type-2 domain. Mg(2+) contacts are provided by Asp373 and Asp374.

In the C-terminal section; belongs to the purine/pyrimidine phosphoribosyltransferase family. Mg(2+) is required as a cofactor.

It catalyses the reaction 5-phospho-beta-D-ribosylamine + L-glutamate + diphosphate = 5-phospho-alpha-D-ribose 1-diphosphate + L-glutamine + H2O. It functions in the pathway purine metabolism; IMP biosynthesis via de novo pathway; N(1)-(5-phospho-D-ribosyl)glycinamide from 5-phospho-alpha-D-ribose 1-diphosphate: step 1/2. This is Amidophosphoribosyltransferase (ADE4) from Lachancea kluyveri (Yeast).